The sequence spans 441 residues: Protein arginine methyltransferase NDUFAF7, mitochondrial (441 aa).

Residues 1 to 46 (MSVLLRSGLGPLCAVARAAIPFIWRGKYFSSGNEPAENPVTPMLRH) constitute a mitochondrion transit peptide.

It belongs to the NDUFAF7 family. As to quaternary structure, interacts with NDUFS2.

It is found in the mitochondrion. The catalysed reaction is L-arginyl-[protein] + 2 S-adenosyl-L-methionine = N(omega),N(omega)'-dimethyl-L-arginyl-[protein] + 2 S-adenosyl-L-homocysteine + 2 H(+). Its function is as follows. Arginine methyltransferase involved in the assembly or stability of mitochondrial NADH:ubiquinone oxidoreductase complex (complex I). Acts by mediating symmetric dimethylation of 'Arg-118' of NDUFS2 after it assembles into the complex I, stabilizing the early intermediate complex. This is Protein arginine methyltransferase NDUFAF7, mitochondrial from Homo sapiens (Human).